The chain runs to 414 residues: 3-ketoacyl-CoA thiolase, peroxisomal (414 aa).

The transit peptide at 1–9 (MDRLNNLAT) directs the protein to the peroxisome. Residues 1–9 (MDRLNNLAT) form a PTS2-type peroxisomal targeting signal region. The active-site Acyl-thioester intermediate is C115. Residues H370 and C400 each act as proton acceptor in the active site.

It belongs to the thiolase-like superfamily. Thiolase family. As to quaternary structure, homodimer. Interacts (via PTS2-type peroxisomal targeting signal region) with PEX7; leading to its translocation into peroxisomes.

The protein resides in the peroxisome. It catalyses the reaction an acyl-CoA + acetyl-CoA = a 3-oxoacyl-CoA + CoA. The protein operates within lipid metabolism; fatty acid metabolism. Functionally, responsible for the thiolytic cleavage of straight chain 3-keto fatty acyl-CoAs (3-oxoacyl-CoAs). The polypeptide is 3-ketoacyl-CoA thiolase, peroxisomal (POT1) (Yarrowia lipolytica (strain CLIB 122 / E 150) (Yeast)).